The following is a 137-amino-acid chain: Basic phospholipase A2 homolog Pgo-K49 (137 aa).

An N-terminal signal peptide occupies residues 1 to 16; sequence MRTLLIVAVLLVGVEG. 7 disulfide bridges follow: C42–C131, C44–C60, C59–C111, C65–C137, C66–C104, C73–C97, and C91–C102. Residues 121-133 form an important for membrane-damaging activities in eukaryotes and bacteria; heparin-binding region; that stretch reads KKYKIHMKFFCKK.

Expressed by the venom gland.

The protein localises to the secreted. Snake venom phospholipase A2 homolog that lacks enzymatic activity. Is myotoxic. A model of myotoxic mechanism has been proposed: an apo Lys49-PLA2 is activated by the entrance of a hydrophobic molecule (e.g. fatty acid) at the hydrophobic channel of the protein leading to a reorientation of a monomer. This reorientation causes a transition between 'inactive' to 'active' states, causing alignment of C-terminal and membrane-docking sites (MDoS) side-by-side and putting the membrane-disruption sites (MDiS) in the same plane, exposed to solvent and in a symmetric position for both monomers. The MDoS region stabilizes the toxin on membrane by the interaction of charged residues with phospholipid head groups. Subsequently, the MDiS region destabilizes the membrane with penetration of hydrophobic residues. This insertion causes a disorganization of the membrane, allowing an uncontrolled influx of ions (i.e. calcium and sodium), and eventually triggering irreversible intracellular alterations and cell death. The chain is Basic phospholipase A2 homolog Pgo-K49 from Cerrophidion godmani (Porthidium godmani).